A 103-amino-acid chain; its full sequence is Large ribosomal subunit protein bL21 (103 aa).

The protein belongs to the bacterial ribosomal protein bL21 family. As to quaternary structure, part of the 50S ribosomal subunit. Contacts protein L20.

In terms of biological role, this protein binds to 23S rRNA in the presence of protein L20. The protein is Large ribosomal subunit protein bL21 of Rhodococcus jostii (strain RHA1).